The primary structure comprises 377 residues: Alanine dehydrogenase (377 aa).

The substrate site is built by R15 and K74. The active-site Proton donor/acceptor is H95. Residues S133, D197, R202, S219, 238–239 (VL), 266–269 (VAID), and 304–307 (VGNM) each bind NAD(+). D269 functions as the Proton donor/acceptor in the catalytic mechanism.

It belongs to the AlaDH/PNT family. In terms of assembly, homohexamer.

It catalyses the reaction L-alanine + NAD(+) + H2O = pyruvate + NH4(+) + NADH + H(+). It participates in organosulfur degradation; alkanesulfonate degradation. Functionally, involved in an anaerobic respiration pathway that converts the sulfonate taurine (2-aminoethanesulfonate) to ammonia, acetate and sulfide. Acts as an alanine dehydrogenase that regenerates pyruvate, the amino group acceptor for the taurine--pyruvate aminotransferase enzyme, and liberates ammonia. This Bilophila wadsworthia (strain 3_1_6) protein is Alanine dehydrogenase.